We begin with the raw amino-acid sequence, 263 residues long: Phosphatidylglycerol--prolipoprotein diacylglyceryl transferase (263 aa).

4 consecutive transmembrane segments (helical) span residues 10 to 30, 56 to 76, 91 to 111, and 117 to 137; these read VAIT…LFGF, MVTY…ILFY, IWNG…AMWL, and GLGF…GLFF. R139 provides a ligand contact to a 1,2-diacyl-sn-glycero-3-phospho-(1'-sn-glycerol). A run of 3 helical transmembrane segments spans residues 171-191, 199-219, and 231-251; these read PSQL…LWVF, GHVS…VEFV, and FGWL…GLWL.

Belongs to the Lgt family.

Its subcellular location is the cell inner membrane. It carries out the reaction L-cysteinyl-[prolipoprotein] + a 1,2-diacyl-sn-glycero-3-phospho-(1'-sn-glycerol) = an S-1,2-diacyl-sn-glyceryl-L-cysteinyl-[prolipoprotein] + sn-glycerol 1-phosphate + H(+). It participates in protein modification; lipoprotein biosynthesis (diacylglyceryl transfer). Its function is as follows. Catalyzes the transfer of the diacylglyceryl group from phosphatidylglycerol to the sulfhydryl group of the N-terminal cysteine of a prolipoprotein, the first step in the formation of mature lipoproteins. In Nitratidesulfovibrio vulgaris (strain DP4) (Desulfovibrio vulgaris), this protein is Phosphatidylglycerol--prolipoprotein diacylglyceryl transferase.